Reading from the N-terminus, the 355-residue chain is Protein RecA (355 aa).

An ATP-binding site is contributed by 67–74 (GPESSGKT).

It belongs to the RecA family.

It localises to the cytoplasm. In terms of biological role, can catalyze the hydrolysis of ATP in the presence of single-stranded DNA, the ATP-dependent uptake of single-stranded DNA by duplex DNA, and the ATP-dependent hybridization of homologous single-stranded DNAs. It interacts with LexA causing its activation and leading to its autocatalytic cleavage. This is Protein RecA from Shewanella amazonensis (strain ATCC BAA-1098 / SB2B).